Consider the following 587-residue polypeptide: Beta-(1--&gt;2)glucan export ATP-binding/permease protein NdvA (587 aa).

In terms of domain architecture, ABC transmembrane type-1 spans 21–301 (VSLVVIANIV…MRQFATQIFE (281 aa)). A run of 6 helical transmembrane segments spans residues 23–43 (LVVI…ILFG), 57–77 (PILF…VLVS), 126–146 (LFGL…ALAL), 158–178 (LSAV…VVMS), 248–268 (MAST…VQSG), and 272–292 (IGDV…LDLM). Residues 335–569 (IEFRDVSFGF…NGRFAALLRA (235 aa)) enclose the ABC transporter domain. 368–375 (GPTGAGKT) provides a ligand contact to ATP.

Belongs to the ABC transporter superfamily. Beta-(1--&gt;2)glucan exporter (TC 3.A.1.108.1) family. As to quaternary structure, homodimer.

The protein resides in the cell inner membrane. It carries out the reaction [(1-&gt;2)-beta-D-glucosyl](n)(in) + ATP + H2O = [(1-&gt;2)-beta-D-glucosyl](n)(out) + ADP + phosphate + H(+). In terms of biological role, involved in beta-(1--&gt;2)glucan export. Transmembrane domains (TMD) form a pore in the inner membrane and the ATP-binding domain (NBD) is responsible for energy generation. This Rhizobium etli (strain ATCC 51251 / DSM 11541 / JCM 21823 / NBRC 15573 / CFN 42) protein is Beta-(1--&gt;2)glucan export ATP-binding/permease protein NdvA.